Here is a 376-residue protein sequence, read N- to C-terminus: Chaperone protein DnaJ (376 aa).

In terms of domain architecture, J spans 5–70 (DYYEVLGVAK…QKRAAYDQYG (66 aa)). The segment at 136 to 214 (GYDTQIRVPS…CHGSGKVKET (79 aa)) adopts a CR-type zinc-finger fold. Zn(2+) contacts are provided by Cys149, Cys152, Cys166, Cys169, Cys188, Cys191, Cys202, and Cys205. 4 CXXCXGXG motif repeats span residues 149–156 (CGVCHGSG), 166–173 (CPTCHGQG), 188–195 (CPKCHGTG), and 202–209 (CAHCHGSG).

It belongs to the DnaJ family. In terms of assembly, homodimer. The cofactor is Zn(2+).

The protein localises to the cytoplasm. In terms of biological role, participates actively in the response to hyperosmotic and heat shock by preventing the aggregation of stress-denatured proteins and by disaggregating proteins, also in an autonomous, DnaK-independent fashion. Unfolded proteins bind initially to DnaJ; upon interaction with the DnaJ-bound protein, DnaK hydrolyzes its bound ATP, resulting in the formation of a stable complex. GrpE releases ADP from DnaK; ATP binding to DnaK triggers the release of the substrate protein, thus completing the reaction cycle. Several rounds of ATP-dependent interactions between DnaJ, DnaK and GrpE are required for fully efficient folding. Also involved, together with DnaK and GrpE, in the DNA replication of plasmids through activation of initiation proteins. The polypeptide is Chaperone protein DnaJ (Burkholderia mallei (strain NCTC 10229)).